We begin with the raw amino-acid sequence, 1109 residues long: MAGRGGRDPRRGYDGGYGYPRGGGGQGGTNRGRDGQRGGGRNGPRGGRFPGGRGVEPRRGGDVLGGGQGGGRGTTAGAGGLVRGGSELAVGAELRRRVPTCHVNDFPELGIGGTPVLVRRWRPRDHRDQHDHQSQRHHHRHHHHQRQRHHHHHQRQQRRGSRTRDPRVRRGPLRIPYGEDEKEEPPATPIASSNKNKREEPPTKHRPMARPPGGGGPLSKGEVKLLVNHFSVDYPKESTFFHYEIRIKLGDGPNRKLSKAELLTVKNELFEHESLQELSSAVAYDGERNLYTCAELPEDCIVPVSKFRVKDSSRTYIVSVKLKKPLPLSQLLEQRPGPRDVMQGLDVIVREASSFGKIVLGQGFYPQSGSEAISDSNIVALKGTQQSLKCTQKGLILCVDYSVLPCWKAGSVLDLVKTMKFMEYPLLEDQLKKLNNALKGLCVTVSHRKTEEKYTVKGLTDKPADQITFKDSKSGQTTKLIEYYKETYKKEIEHPMLPCLDLSKSKSKQNYVPIEFCNIPEGERYPVARLDDKKSDNKGEQEKPSTKTTLRKISIKVASSRKEEILDLVGNAQDGPCRGKIAQRFRISLDAAMMEVTGRILAPPTLELGTGTSRGQTFKFTIHQDDCQWNWKLKKYDKRVVAHGGTLNCWGVVDFSEGDLESKFIDKVVRKCSALGMVMTRKPCYEHVSNMEVLSDPKSLRDALIEAKRAAEEEDKKLQLLFCPMLNRCHGYKTLKLMCETELGIQTQCFLSTAAKLDEKRQDQYITNLALKINGKIGGSNMQLDPDSIPVVSAKDFMFIGADVNHPPPGNVSKDIPSIAAVVASVDKGASKYVTRIRAQYHRCEMIQNLGDICKELIGAYEKVNKKKPDSIIYFRDGVSDGQFDMVLNEELADMENKIMVGDYPKITVIVAKKRHHTRLFPKDRNQRQTKNGNVLPGTVVDTDVVDPTAYDFYLCSHKGEVGTSRPTHYYSLLDEHGFASDDLQKLVYNLCFVFARCTKPVSLATPVYYADLAAYRGRLYYEGMMMLQPAASAASASEAMMPAAQPQAAAAAAAAASPSSSAASSSEGMTASQPQAPAAEAASSSAGAADFRELPPMHGDLLNNMFFL.

Basic and acidic residues predominate over residues 1-13 (MAGRGGRDPRRGY). 2 disordered regions span residues 1–83 (MAGR…GLVR) and 125–220 (DHRD…PLSK). 3 stretches are compositionally biased toward gly residues: residues 14–30 (DGGY…GGTN), 37–54 (RGGG…GGRG), and 62–83 (DVLG…GLVR). Positions 125-134 (DHRDQHDHQS) are enriched in basic and acidic residues. Residues 135 to 161 (QRHHHRHHHHQRQRHHHHHQRQQRRGS) are compositionally biased toward basic residues. A PAZ domain is found at 411-521 (SVLDLVKTMK…VPIEFCNIPE (111 aa)). Residues 527–545 (VARLDDKKSDNKGEQEKPS) are compositionally biased toward basic and acidic residues. A disordered region spans residues 527 to 548 (VARLDDKKSDNKGEQEKPSTKT). One can recognise a Piwi domain in the interval 720 to 1023 (LLFCPMLNRC…AAYRGRLYYE (304 aa)).

This sequence belongs to the argonaute family. Ago subfamily.

Functionally, probably involved in the RNA silencing pathway. May bind to short RNAs such as microRNAs (miRNAs) or short interfering RNAs (siRNAs), and represses the translation of mRNAs which are complementary to them. The polypeptide is Protein argonaute 3 (AGO3) (Oryza sativa subsp. japonica (Rice)).